A 233-amino-acid chain; its full sequence is MPSNSPAPDAPLAVVLLSGGLDSMVCAGLAQEQGFRVLALTIDYNQRHRVELDAARAIAARLGVERHVILPLDLRQFGGSALTADIAVPKDGVGDDIPVTYVPARNLIFLSLALAWAEAAGSKDLFIGVNALDYSGYPDCRPEFVAGFEDLARIATKVGSEGGTVTVHAPLQHLKKSEIAREAARLGLEAGDSWSCYDPLPDGRACGVCDSCRLRRAGFEEAGLNDGTRYGGG.

ATP is bound at residue 17–27; the sequence is LSGGLDSMVCA. Zn(2+)-binding residues include Cys196, Cys206, Cys209, and Cys212.

This sequence belongs to the QueC family. Requires Zn(2+) as cofactor.

The catalysed reaction is 7-carboxy-7-deazaguanine + NH4(+) + ATP = 7-cyano-7-deazaguanine + ADP + phosphate + H2O + H(+). It participates in purine metabolism; 7-cyano-7-deazaguanine biosynthesis. Functionally, catalyzes the ATP-dependent conversion of 7-carboxy-7-deazaguanine (CDG) to 7-cyano-7-deazaguanine (preQ(0)). In Novosphingobium aromaticivorans (strain ATCC 700278 / DSM 12444 / CCUG 56034 / CIP 105152 / NBRC 16084 / F199), this protein is 7-cyano-7-deazaguanine synthase.